We begin with the raw amino-acid sequence, 204 residues long: Ras-related protein Rab-7L1 (204 aa).

Residues Ser-33, Lys-34, His-35, Tyr-36, Lys-37, and Thr-39 each coordinate GTP. The Effector region motif lies at 36-44 (YKSTVGVDF). Thr-71 is subject to Phosphothreonine; by LRRK2. Residue Ser-72 is modified to Phosphoserine. The GTP site is built by Lys-126, Val-156, and Lys-157. Residues Cys-203 and Cys-204 are each lipidated (S-geranylgeranyl cysteine).

It belongs to the small GTPase superfamily. Rab family. Interacts with LRRK2 (via the N-terminus); this interaction is direct and stimulates kinase activity. As to expression, expressed predominantly in kidney and much less in brain, heart, muscle, fat, liver, spleen, adrenal gland, ovary, thymus and lung. Not expressed in testis and intestine.

It localises to the cell membrane. The protein localises to the cytoplasm. It is found in the perinuclear region. Its subcellular location is the golgi apparatus. The protein resides in the golgi apparatus membrane. It localises to the trans-Golgi network. The protein localises to the cytoskeleton. Its function is as follows. The small GTPases Rab are key regulators in vesicle trafficking. Essential for maintaining the integrity of endosome-trans-Golgi network structure. Together with LRRK2, plays a role in the retrograde trafficking pathway for recycling proteins, such as mannose 6 phosphate receptor (M6PR), between lysosomes and the Golgi apparatus in a retromer-dependent manner. Recruits LRRK2 to the Golgi apparatus and stimulates LRRK2 kinase activity. Stimulates phosphorylation of RAB10 'Thr-73' by LRRK2. Regulates also neuronal process morphology in the intact central nervous system (CNS). The polypeptide is Ras-related protein Rab-7L1 (Rab29) (Rattus norvegicus (Rat)).